The chain runs to 1736 residues: MERCSRCHRLLLFLPLVLGLSAAPGWAGAPSVDVLRALRFPSLPDGVRRSKGVCPGDVAYRVARPAQLSAPTRQLFPGGFPKDFSLLTVVRTRPGLQAPLLTLYSAQGVQQLGLELGRPVRFLYEDQRGRPQASAQPIFRGLSLADGKWHHVAVAVKGQSVTLIVDCKKRVTRPLPRSVHPVLDTHGVVIFGAHILDDEVFEGDVQELLVVPGVQAAYQSCGQKDLECEREQRDGPQTQKPHRAQRSPKKEPARLHKPQSQEPQKQPTESLYYDYEPPYYDVMTTGTAPDYQYPTPGEEEGVLESSPLPFLEEEQTDLQVSPTADSFQAEEYGEGGTDSPAGFYDYTYGYGDDYREETELGPALSAETAHSGAVAHGPRGLKGEKGEPAVLEPGMFVEGPPGPEGPAGLAGPPGIQGNPGPVGDPGERGPPGRAGLPGSDGPPGPPGTSLMLPFRFGSSGGDKGPVVAAQEAQAQAILQQARLALRGPPGPMGYTGRPGPLGQPGSPGLKGESGDLGPQGPRGPQGLTGPPGKAGRRGRAGADGARGMPGEPGMKGDRGFDGLPGLPGEKGQRGDTGAQGLPGPPGEDGERGDDGEIGPRGLPGESGPRGLLGPKGPPGIPGPPGVRGMDGPHGPKGSLGPQGEPGPPGQQGTPGAQGLPGPQGAIGPHGEKGARGKPGLPGMPGSDGLPGHPGKEGPPGTKGNQGPSGPQGPLGYPGPRGVKGVDGIRGLKGHKGEKGEDGFPGFKGDIGVKGDRGEVGVPGSRGEDGPEGPKGRTGPTGDPGPTGLMGEKGKLGVPGLPGYPGRQGPKGSLGFPGFPGASGEKGARGLSGKSGPRGERGPTGPRGQRGPRGATGKSGAKGTSGGDGPHGPPGERGLPGPQGPNGFPGPKGPPGPAGKDGLPGHPGQRGEVGFQGKTGPPGPPGVVGPQGTAGESGPMGERGHSGPPGPPGEQGLPGTSGKEGTKGDPGPPGAPGKDGPAGLRGFPGERGLPGTAGGPGLKGNEGPAGPPGPAGSPGERGAAGSGGPIGPPGRPGPQGPPGAAGEKGVPGEKGPIGPTGRDGVQGPVGLPGPAGPPGVAGEDGDKGEVGDPGQKGTKGNKGEHGPPGPPGPIGPVGQPGAAGADGEPGARGPQGHFGAKGDEGTRGFNGPPGPIGLQGLPGPSGEKGETGDGGPMGPPGPPGPRGPAGPNGADGPQGSPGGVGNLGPPGEKGEPGESGSPGVQGEPGVKGPRGERGEKGESGQAGEAGPPGPKGPTGDNGPKGNPGPVGFPGDPGPPGEAGPRGQDGAKGDRGEDGEPGQPGSPGPTGENGPPGPLGKRGPAGTPGPEGRQGEKGAKGDPGAVGAPGKTGPVGPAGLAGKPGPDGLRGLPGSVGQQGRPGATGQAGPPGPVGPPGLPGLRGDAGAKGEKGHPGLIGLIGPTGEQGEKGDRGLPGPQGSPGQKGETGIPGASGPIGPGGPPGLPGPSGPKGAKGATGPAGPKGEKGVQGPPGHPGPPGEVIQPLPIQMPKKTRRSVDGSKLIQDEEAVPTGGAPGSPAGLEEIFGSLDSLREEIEQMRRPAGTQDSPARTCQDLKLCHPELPDGEYWVDPNQGCARDAFRVFCNFTAGGETCVTPRDDVTQFSYVDSEGSPVGVVQLTFLRLLSVSAHQDVSYPCSGVSQDGPLKLRGANEDELSPETSPYVKEFRDGCQTQQGRTVLEVRTPVLEQLPVLDASFADLGAPTRRGGVLLGPVCFMG.

An N-terminal signal peptide occupies residues Met1 to Ala27. Positions Asp57 to Cys228 constitute a Laminin G-like domain. The segment at Gln215–Arg486 is nonhelical region. Disordered stretches follow at residues Cys228–Ser270, Leu364–Pro465, and Leu485–Ala1538. Residues Pro258–Glu269 are compositionally biased toward polar residues. Collagen-like domains are found at residues Gly399–Gly447, Gly487–Ala545, and Arg546–Gly583. A triple-helical region region spans residues Gly487–Val1500. The segment covering Arg497–Lys533 has biased composition (low complexity). Residues Lys615–Pro624 are compositionally biased toward pro residues. Positions Gln650–Pro668 are enriched in low complexity. Positions Gly682–Glu737 constitute a Collagen-like 4 domain. A compositionally biased stretch (basic and acidic residues) spans Arg765 to Lys774. 2 stretches are compositionally biased toward low complexity: residues Arg776–Met789 and Pro842–Lys861. Collagen-like domains lie at Gly868–Pro924, Gly967–Ser1025, Gly1026–Pro1055, Ile1056–Lys1086, and Gly1114–Asp1172. The span at Gly994–Gly1003 shows a compositional bias: gly residues. Over residues Ile1029 to Pro1040 the composition is skewed to pro residues. 2 stretches are compositionally biased toward low complexity: residues Pro1115 to Pro1133 and Ile1155 to Ser1164. Over residues Met1176–Pro1187 the composition is skewed to pro residues. Residues Ala1188–Gln1197 show a composition bias toward low complexity. The segment covering Gly1198 to Gly1207 has biased composition (gly residues). Residues Glu1217–Lys1230 are compositionally biased toward low complexity. A compositionally biased stretch (basic and acidic residues) spans Pro1232 to Glu1241. Low complexity predominate over residues Pro1256–Pro1272. Residues Asp1287–Asp1296 show a composition bias toward basic and acidic residues. Residues Gln1376 to Ala1386 are compositionally biased toward low complexity. Pro residues-rich tracts occupy residues Pro1388 to Leu1397 and Pro1457 to Ser1467. 2 consecutive Collagen-like domains span residues Gly1393 to Gly1447 and Ile1448 to Glu1499. Residues Pro1469–Pro1481 show a composition bias toward low complexity. The propeptide at Ile1501 to Gly1736 is C-terminal propeptide. Residues Glu1541–Met1735 form the Fibrillar collagen NC1 domain. Cys1571 and Cys1603 form a disulfide bridge. Ca(2+)-binding residues include Asp1589, Asn1591, Gln1592, Cys1594, and Asp1597. Asn1604 carries N-linked (GlcNAc...) asparagine glycosylation. Intrachain disulfides connect Cys1612/Cys1733 and Cys1655/Cys1689.

It belongs to the fibrillar collagen family. In terms of assembly, trimers composed of three different chains: alpha 1(XI), alpha 2(XI), and alpha 3(XI). Alpha 3(XI) is a post-translational modification of alpha 1(II). Alpha 1(V) can also be found instead of alpha 3(XI)=1(II). Post-translationally, prolines at the third position of the tripeptide repeating unit (G-X-Y) are hydroxylated in some or all of the chains.

It localises to the secreted. The protein localises to the extracellular space. It is found in the extracellular matrix. Functionally, may play an important role in fibrillogenesis by controlling lateral growth of collagen II fibrils. The chain is Collagen alpha-2(XI) chain (Col11a2) from Mus musculus (Mouse).